The following is a 318-amino-acid chain: Transaldolase (318 aa).

Residue Lys132 is the Schiff-base intermediate with substrate of the active site.

It belongs to the transaldolase family. Type 1 subfamily. Homodimer.

It is found in the cytoplasm. The enzyme catalyses D-sedoheptulose 7-phosphate + D-glyceraldehyde 3-phosphate = D-erythrose 4-phosphate + beta-D-fructose 6-phosphate. Its pathway is carbohydrate degradation; pentose phosphate pathway; D-glyceraldehyde 3-phosphate and beta-D-fructose 6-phosphate from D-ribose 5-phosphate and D-xylulose 5-phosphate (non-oxidative stage): step 2/3. Its function is as follows. Transaldolase is important for the balance of metabolites in the pentose-phosphate pathway. The sequence is that of Transaldolase from Shewanella loihica (strain ATCC BAA-1088 / PV-4).